The sequence spans 159 residues: Heat shock protein beta-9 (159 aa).

The sHSP domain occupies 36–147 (LLRDSPAAQE…EAQTGPSPRL (112 aa)).

It belongs to the small heat shock protein (HSP20) family. In terms of tissue distribution, testis specific.

The protein resides in the cytoplasm. The protein localises to the nucleus. This chain is Heat shock protein beta-9 (HSPB9), found in Homo sapiens (Human).